Here is a 349-residue protein sequence, read N- to C-terminus: tRNA (guanine(26)-N(2))-dimethyltransferase (349 aa).

A Trm1 methyltransferase domain is found at 1 to 343; it reads MEVEEGRARV…ADRDVVVKIL (343 aa). 5 residues coordinate S-adenosyl-L-methionine: arginine 25, arginine 50, aspartate 66, aspartate 92, and alanine 93.

The protein belongs to the class I-like SAM-binding methyltransferase superfamily. Trm1 family.

The catalysed reaction is guanosine(26) in tRNA + 2 S-adenosyl-L-methionine = N(2)-dimethylguanosine(26) in tRNA + 2 S-adenosyl-L-homocysteine + 2 H(+). In terms of biological role, dimethylates a single guanine residue at position 26 of a number of tRNAs using S-adenosyl-L-methionine as donor of the methyl groups. The polypeptide is tRNA (guanine(26)-N(2))-dimethyltransferase (Archaeoglobus fulgidus (strain ATCC 49558 / DSM 4304 / JCM 9628 / NBRC 100126 / VC-16)).